Here is a 260-residue protein sequence, read N- to C-terminus: Snake venom serine protease KN14 (260 aa).

Positions 1–18 (MVLIRVLANLLILQLSYA) are cleaved as a signal peptide. Residues 19-24 (QKSSEL) constitute a propeptide that is removed on maturation. Positions 25 to 251 (VIGGDECNIN…HLDWIQSIIA (227 aa)) constitute a Peptidase S1 domain. 5 disulfide bridges follow: C31–C165, C100–C258, C144–C212, C176–C191, and C202–C227. H67 (charge relay system) is an active-site residue. An N-linked (GlcNAc...) asparagine glycan is attached at N105. The active-site Charge relay system is D112. N-linked (GlcNAc...) asparagine glycosylation is present at N172. The Charge relay system role is filled by S206. N-linked (GlcNAc...) asparagine glycans are attached at residues N213 and N255.

This sequence belongs to the peptidase S1 family. Snake venom subfamily. In terms of assembly, monomer. Expressed by the venom gland.

It is found in the secreted. Functionally, snake venom serine protease that may act in the hemostasis system of the prey. This chain is Snake venom serine protease KN14, found in Trimeresurus stejnegeri (Chinese green tree viper).